Consider the following 656-residue polypeptide: Putative cysteine-rich receptor-like protein kinase 32 (656 aa).

Positions 1-23 are cleaved as a signal peptide; it reads MCLQNLLSILCFVLAISFGYVSA. 2 consecutive Gnk2-homologous domains span residues 24 to 126 and 134 to 238; these read QKCV…NSSF and PTMV…GSEY. Over 24-262 the chain is Extracellular; sequence QKCVDSMFFR…PDGKTISTGA (239 aa). Residues N35, N52, N61, N103, and N123 are each glycosylated (N-linked (GlcNAc...) asparagine). A helical transmembrane segment spans residues 263-283; that stretch reads IVAVVVSVVIFVVLLALVLVI. The Cytoplasmic portion of the chain corresponds to 284–656; it reads RKRRQSYKTL…SASITRVTPR (373 aa). Residues 321–606 enclose the Protein kinase domain; that stretch reads FSRNNKLGKG…IFQMLTNSSI (286 aa). ATP contacts are provided by residues 327–335 and K349; that span reads LGKGGFGEV. Y394 is modified (phosphotyrosine). D454 functions as the Proton acceptor in the catalytic mechanism. At S458 the chain carries Phosphoserine. Position 494 is a phosphothreonine (T494). Y502 is modified (phosphotyrosine).

It belongs to the protein kinase superfamily. Ser/Thr protein kinase family. CRK subfamily.

It localises to the membrane. The enzyme catalyses L-seryl-[protein] + ATP = O-phospho-L-seryl-[protein] + ADP + H(+). It catalyses the reaction L-threonyl-[protein] + ATP = O-phospho-L-threonyl-[protein] + ADP + H(+). The sequence is that of Putative cysteine-rich receptor-like protein kinase 32 (CRK32) from Arabidopsis thaliana (Mouse-ear cress).